We begin with the raw amino-acid sequence, 254 residues long: Phosphoribosylaminoimidazole-succinocarboxamide synthase (254 aa).

Belongs to the SAICAR synthetase family.

It catalyses the reaction 5-amino-1-(5-phospho-D-ribosyl)imidazole-4-carboxylate + L-aspartate + ATP = (2S)-2-[5-amino-1-(5-phospho-beta-D-ribosyl)imidazole-4-carboxamido]succinate + ADP + phosphate + 2 H(+). Its pathway is purine metabolism; IMP biosynthesis via de novo pathway; 5-amino-1-(5-phospho-D-ribosyl)imidazole-4-carboxamide from 5-amino-1-(5-phospho-D-ribosyl)imidazole-4-carboxylate: step 1/2. The chain is Phosphoribosylaminoimidazole-succinocarboxamide synthase from Bartonella tribocorum (strain CIP 105476 / IBS 506).